Reading from the N-terminus, the 82-residue chain is MGREFGNLTRMRHVISYSLSPFEQRAHPHVFTKGIPNVLRRFRESFFRVAPQFVVFYLIYTWGTEEFERSKRKNPAAYENDK.

The Mitochondrial matrix portion of the chain corresponds to Met-1–Leu-39. The residue at position 16 (Ser-16) is a Phosphoserine. Position 33 is an N6-acetyllysine; alternate (Lys-33). N6-succinyllysine; alternate is present on Lys-33. Residues Arg-40–Glu-68 form a helical membrane-spanning segment. Residues Arg-69–Lys-82 lie on the Mitochondrial intermembrane side of the membrane.

It belongs to the UQCRQ/QCR8 family. As to quaternary structure, component of the ubiquinol-cytochrome c oxidoreductase (cytochrome b-c1 complex, complex III, CIII), a multisubunit enzyme composed of 11 subunits. The complex is composed of 3 respiratory subunits cytochrome b, cytochrome c1 and Rieske protein UQCRFS1, 2 core protein subunits UQCRC1/QCR1 and UQCRC2/QCR2, and 6 low-molecular weight protein subunits UQCRH/QCR6, UQCRB/QCR7, UQCRQ/QCR8, UQCR10/QCR9, UQCR11/QCR10 and subunit 9, the cleavage product of Rieske protein UQCRFS1. The complex exists as an obligatory dimer and forms supercomplexes (SCs) in the inner mitochondrial membrane with NADH-ubiquinone oxidoreductase (complex I, CI) and cytochrome c oxidase (complex IV, CIV), resulting in different assemblies (supercomplex SCI(1)III(2)IV(1) and megacomplex MCI(2)III(2)IV(2)). Interacts with UQCC6.

The protein resides in the mitochondrion inner membrane. Functionally, component of the ubiquinol-cytochrome c oxidoreductase, a multisubunit transmembrane complex that is part of the mitochondrial electron transport chain which drives oxidative phosphorylation. The respiratory chain contains 3 multisubunit complexes succinate dehydrogenase (complex II, CII), ubiquinol-cytochrome c oxidoreductase (cytochrome b-c1 complex, complex III, CIII) and cytochrome c oxidase (complex IV, CIV), that cooperate to transfer electrons derived from NADH and succinate to molecular oxygen, creating an electrochemical gradient over the inner membrane that drives transmembrane transport and the ATP synthase. The cytochrome b-c1 complex catalyzes electron transfer from ubiquinol to cytochrome c, linking this redox reaction to translocation of protons across the mitochondrial inner membrane, with protons being carried across the membrane as hydrogens on the quinol. In the process called Q cycle, 2 protons are consumed from the matrix, 4 protons are released into the intermembrane space and 2 electrons are passed to cytochrome c. The sequence is that of Cytochrome b-c1 complex subunit 8 (UQCRQ) from Pongo abelii (Sumatran orangutan).